The following is a 368-amino-acid chain: High affinity transport system protein p37 (368 aa).

The N-terminal stretch at 1–25 (MLFKKFTWVIPSLFLTIISTSLLIS) is a signal peptide. C26 carries the N-palmitoyl cysteine lipid modification. C26 is lipidated: S-diacylglycerol cysteine.

It localises to the cell membrane. In terms of biological role, P37 is part of a high-affinity transport system. The sequence is that of High affinity transport system protein p37 (p37) from Mycoplasma genitalium (strain ATCC 33530 / DSM 19775 / NCTC 10195 / G37) (Mycoplasmoides genitalium).